Here is a 55-residue protein sequence, read N- to C-terminus: Large ribosomal subunit protein bL33 (55 aa).

Belongs to the bacterial ribosomal protein bL33 family.

This Hyphomonas neptunium (strain ATCC 15444) protein is Large ribosomal subunit protein bL33.